Reading from the N-terminus, the 67-residue chain is U-myrmeciitoxin(01)-Mg4a (67 aa).

An N-terminal signal peptide occupies residues 1–25 (MGKVFFFVLMIAIIGSTFLIEEALG).

It belongs to the ant myrmeciitoxin-01 family. Homodimer; disulfide-linked. Post-translationally, contains 2 intrachain disulfide bonds (one per chain) and 1 interchain disulfide bond. In terms of tissue distribution, expressed by the venom gland.

It is found in the secreted. The polypeptide is U-myrmeciitoxin(01)-Mg4a (Myrmecia gulosa (Red bulldog ant)).